The primary structure comprises 186 residues: MRLVETIVSGMAGRYATALFELAEEAGSTDAVAADLDRLKGLIAESADLERLVKSPVFTAEEQVKAVGAVLAAAGITGIAANFVKLVAQNRRLFALPSMFDAFAALVAAKRGQTVAKVTVAEPLNDAHQAALKEALAQQTGKDVSLDVTVDPSILGGLIVKLGSRMVDASLKTKLNSIRHAMKEVR.

This sequence belongs to the ATPase delta chain family. As to quaternary structure, F-type ATPases have 2 components, F(1) - the catalytic core - and F(0) - the membrane proton channel. F(1) has five subunits: alpha(3), beta(3), gamma(1), delta(1), epsilon(1). F(0) has three main subunits: a(1), b(2) and c(10-14). The alpha and beta chains form an alternating ring which encloses part of the gamma chain. F(1) is attached to F(0) by a central stalk formed by the gamma and epsilon chains, while a peripheral stalk is formed by the delta and b chains.

It localises to the cell inner membrane. F(1)F(0) ATP synthase produces ATP from ADP in the presence of a proton or sodium gradient. F-type ATPases consist of two structural domains, F(1) containing the extramembraneous catalytic core and F(0) containing the membrane proton channel, linked together by a central stalk and a peripheral stalk. During catalysis, ATP synthesis in the catalytic domain of F(1) is coupled via a rotary mechanism of the central stalk subunits to proton translocation. In terms of biological role, this protein is part of the stalk that links CF(0) to CF(1). It either transmits conformational changes from CF(0) to CF(1) or is implicated in proton conduction. The polypeptide is ATP synthase subunit delta (Azorhizobium caulinodans (strain ATCC 43989 / DSM 5975 / JCM 20966 / LMG 6465 / NBRC 14845 / NCIMB 13405 / ORS 571)).